Reading from the N-terminus, the 596-residue chain is Elongation factor 4 (596 aa).

Residues 2–184 (KQIRNFSIIA…VIVAKIPPPE (183 aa)) form the tr-type G domain. Residues 14–19 (DHGKST) and 131–134 (NKID) contribute to the GTP site.

This sequence belongs to the TRAFAC class translation factor GTPase superfamily. Classic translation factor GTPase family. LepA subfamily.

The protein localises to the cell inner membrane. The catalysed reaction is GTP + H2O = GDP + phosphate + H(+). Its function is as follows. Required for accurate and efficient protein synthesis under certain stress conditions. May act as a fidelity factor of the translation reaction, by catalyzing a one-codon backward translocation of tRNAs on improperly translocated ribosomes. Back-translocation proceeds from a post-translocation (POST) complex to a pre-translocation (PRE) complex, thus giving elongation factor G a second chance to translocate the tRNAs correctly. Binds to ribosomes in a GTP-dependent manner. In Shewanella baltica (strain OS223), this protein is Elongation factor 4.